A 423-amino-acid polypeptide reads, in one-letter code: Gamma-glutamyl phosphate reductase (423 aa).

This sequence belongs to the gamma-glutamyl phosphate reductase family.

The protein localises to the cytoplasm. It catalyses the reaction L-glutamate 5-semialdehyde + phosphate + NADP(+) = L-glutamyl 5-phosphate + NADPH + H(+). Its pathway is amino-acid biosynthesis; L-proline biosynthesis; L-glutamate 5-semialdehyde from L-glutamate: step 2/2. Functionally, catalyzes the NADPH-dependent reduction of L-glutamate 5-phosphate into L-glutamate 5-semialdehyde and phosphate. The product spontaneously undergoes cyclization to form 1-pyrroline-5-carboxylate. The polypeptide is Gamma-glutamyl phosphate reductase (Pseudomonas entomophila (strain L48)).